The primary structure comprises 746 residues: Serine/threonine-protein kinase SMU1 (746 aa).

Disordered stretches follow at residues 1–138 and 155–212; these read MSLV…DTLH and QRSH…GSRN. Composition is skewed to low complexity over residues 15-54 and 85-105; these read SSAN…SSTT and SVSS…PSSA. 3 stretches are compositionally biased toward polar residues: residues 106–121, 128–138, and 156–176; these read LPWS…STAT, RSNTAGPDTLH, and RSHS…SSPT. Over residues 194 to 203 the composition is skewed to basic and acidic residues; the sequence is PSRDRERSRD. The 14-residue stretch at 237–250 folds into the CRIB domain; the sequence is ISTPYDPVHLTHVG. A disordered region spans residues 301 to 451; it reads GGSDVWKKMG…RRETKKSTIK (151 aa). The segment covering 370–380 has biased composition (polar residues); it reads PPSNASTSSAD. The span at 414–430 shows a compositional bias: low complexity; sequence SPASRAPDAPAAVSAAS. One can recognise a Protein kinase domain in the interval 472-723; it reads YRSLQKIGQG…ALGMLAHPFL (252 aa). ATP-binding positions include 478-486 and Lys501; that span reads IGQGASGGV. Asp591 acts as the Proton acceptor in catalysis.

The protein belongs to the protein kinase superfamily. STE Ser/Thr protein kinase family. STE20 subfamily.

The protein localises to the cytoplasm. It localises to the nucleus. The enzyme catalyses L-seryl-[protein] + ATP = O-phospho-L-seryl-[protein] + ADP + H(+). It carries out the reaction L-threonyl-[protein] + ATP = O-phospho-L-threonyl-[protein] + ADP + H(+). MAP4K component of the MAPK pathway required for the mating pheromone response and the regulation of cell polarity and cell cycle. Phosphorylates histone H2B to form H2BS10ph. The polypeptide is Serine/threonine-protein kinase SMU1 (SMU1) (Mycosarcoma maydis (Corn smut fungus)).